Here is a 1111-residue protein sequence, read N- to C-terminus: Probable arabinosyltransferase A (1111 aa).

13 helical membrane passes run 12–34 (IIRLIAVGAGITGLLLCAVVPLL), 205–224 (IAVGVGAAAVLIAILALSAL), 333–355 (VWMRIPATLAGIACWLIINHWVL), 370–387 (VAVLTAGAMFLAAWLPFN), 394–413 (PLIALGVLFTWVLVERAIAL), 423–445 (AVVAILTATLAPQGLIAIAALLT), 462–484 (GLLAPLLVLAASLSLITLVVFHS), 530–547 (FPVLVLLLCMFGVLVVLL), 554–576 (GLASGPTWRLIGTTATSLLLLTF), 581–603 (WAIQFGALAGLTGTFGAIAAFAF), 615–637 (TVYITALLFVLAWATAGINGWFG), 652–674 (IAGHPVTSIFLTLSILTGLLAGG), and 695–717 (FLATTPLVVVATTMVLCEVGSLA). A disordered region spans residues 804 to 831 (GLVNSDASPNKPNVTFSDSAGTAGGKGP). Over residues 808 to 823 (SDASPNKPNVTFSDSA) the composition is skewed to polar residues.

The protein belongs to the emb family.

It localises to the cell membrane. Arabinosyl transferase responsible for the polymerization of arabinose into the arabinan of arabinogalactan. This chain is Probable arabinosyltransferase A (embA), found in Mycobacterium leprae (strain TN).